The sequence spans 865 residues: Cadherin-related family member 1 (865 aa).

An N-terminal signal peptide occupies residues 1-23 (MKHVRHFIPSLFLSLVHVCLVQA). Residues 24–705 (NYAPYFFDNG…TKDNPMKALG (682 aa)) lie on the Extracellular side of the membrane. 6 Cadherin domains span residues 38-137 (NGNM…SPEF), 138-249 (INTP…PPMF), 250-356 (IGTP…PPTF), 362-475 (PQNR…VPKF), 476-579 (SSDY…SPEF), and 571-690 (DVND…GPMA). The chain crosses the membrane as a helical span at residues 706 to 726 (VLAGVMGIMVLITIMISTAMF). The Cytoplasmic segment spans residues 727 to 865 (WRNKRSNKIM…RNASMGEPHI (139 aa)). The tract at residues 782 to 810 (ENSNNNVQAAPVPPAAPLPPPPPALAASG) is disordered. Residues 792–805 (PVPPAAPLPPPPPA) show a composition bias toward pro residues.

It is found in the membrane. Its function is as follows. Potential calcium-dependent cell-adhesion protein. This Gallus gallus (Chicken) protein is Cadherin-related family member 1 (CDHR1).